Here is a 211-residue protein sequence, read N- to C-terminus: Ribonuclease HII (211 aa).

An RNase H type-2 domain is found at S21 to I211. The a divalent metal cation site is built by D27, E28, and D122.

The protein belongs to the RNase HII family. It depends on Mn(2+) as a cofactor. The cofactor is Mg(2+).

Its subcellular location is the cytoplasm. It catalyses the reaction Endonucleolytic cleavage to 5'-phosphomonoester.. Functionally, endonuclease that specifically degrades the RNA of RNA-DNA hybrids. This Dehalococcoides mccartyi (strain ATCC BAA-2266 / KCTC 15142 / 195) (Dehalococcoides ethenogenes (strain 195)) protein is Ribonuclease HII.